The sequence spans 407 residues: Methylthioribose kinase (407 aa).

ATP-binding positions include Asn40, Lys57, and 111-113 (EDL). Asp229 is a substrate binding site. 246 to 248 (DAE) lines the ATP pocket. Position 344 (Arg344) interacts with substrate.

It belongs to the methylthioribose kinase family. As to quaternary structure, homodimer.

The catalysed reaction is 5-(methylsulfanyl)-D-ribose + ATP = 5-(methylsulfanyl)-alpha-D-ribose 1-phosphate + ADP + H(+). The protein operates within amino-acid biosynthesis; L-methionine biosynthesis via salvage pathway; S-methyl-5-thio-alpha-D-ribose 1-phosphate from S-methyl-5'-thioadenosine (hydrolase route): step 2/2. Its function is as follows. Catalyzes the phosphorylation of methylthioribose into methylthioribose-1-phosphate. This Yersinia pseudotuberculosis serotype IB (strain PB1/+) protein is Methylthioribose kinase.